Reading from the N-terminus, the 347-residue chain is Quinolinate synthase (347 aa).

The iminosuccinate site is built by histidine 47 and serine 68. A [4Fe-4S] cluster-binding site is contributed by cysteine 113. Residues 139 to 141 (YAN) and serine 156 each bind iminosuccinate. Position 200 (cysteine 200) interacts with [4Fe-4S] cluster. Iminosuccinate is bound by residues 226–228 (HPE) and threonine 243. Cysteine 297 serves as a coordination point for [4Fe-4S] cluster.

This sequence belongs to the quinolinate synthase family. Type 1 subfamily. [4Fe-4S] cluster serves as cofactor.

The protein localises to the cytoplasm. It catalyses the reaction iminosuccinate + dihydroxyacetone phosphate = quinolinate + phosphate + 2 H2O + H(+). It participates in cofactor biosynthesis; NAD(+) biosynthesis; quinolinate from iminoaspartate: step 1/1. Functionally, catalyzes the condensation of iminoaspartate with dihydroxyacetone phosphate to form quinolinate. The chain is Quinolinate synthase from Salmonella paratyphi A (strain ATCC 9150 / SARB42).